The following is a 141-amino-acid chain: MFIYRLVFIAPLILLLFSLAKARHPFDIFHWNWQDFQECLQVNNITIGEYEKYARHETLDYLLNEKVDLRYKCNIKCQLERDSTKWLNAQGRMDLDLMNTTDKASKSITKCMEKAPEELCAYSFRLVMCAFKAGHPVIDSE.

The N-terminal stretch at 1–22 (MFIYRLVFIAPLILLLFSLAKA) is a signal peptide. Cystine bridges form between C39–C77, C73–C120, and C111–C129.

The protein belongs to the PBP/GOBP family.

Functionally, present in the aqueous fluid surrounding olfactory sensory dendrites and are thought to aid in the capture and transport of hydrophobic odorants into and through this fluid. The chain is General odorant-binding protein 57b from Drosophila melanogaster (Fruit fly).